The sequence spans 118 residues: APTVALLLLCALCSAADAPPPPPSAAASADGAYHAGVRPAPTPRDRVEVRVGLSLAQLVSLDEKNEELTTKVYLDLSWWDPRLQWDPHDYGGLGGLRVAASRLWLPDIGLDNNNDGEF.

Residues 1 to 15 (APTVALLLLCALCSA) form the signal peptide.

The protein belongs to the ligand-gated ion channel (TC 1.A.9) family. Acetylcholine receptor (TC 1.A.9.1) subfamily. Beta-1/CHRNB1 sub-subfamily. Pentamer of two alpha chains, and one each of the beta, delta, and gamma chains.

The protein localises to the postsynaptic cell membrane. It localises to the cell membrane. It carries out the reaction K(+)(in) = K(+)(out). It catalyses the reaction Na(+)(in) = Na(+)(out). After binding acetylcholine, the AChR responds by an extensive change in conformation that affects all subunits and leads to opening of an ion-conducting channel across the plasma membrane. The protein is Acetylcholine receptor subunit beta (CHRNB1) of Gallus gallus (Chicken).